A 478-amino-acid polypeptide reads, in one-letter code: Noelin-3 (478 aa).

Positions 1 to 23 are cleaved as a signal peptide; it reads MSAPLLKLGAVLSTMAMISNWMS. N-linked (GlcNAc...) asparagine glycosylation is found at N33, N95, N179, N299, and N465. Positions 77–217 form a coiled coil; sequence CSRDAKSRQL…TRLRDCMKKL (141 aa). The region spanning 218 to 470 is the Olfactomedin-like domain; it reads TCGKLMKITG…QVLFNVTLFH (253 aa). C219 and C401 are oxidised to a cystine.

Peripherally associated with AMPAR complex. AMPAR complex consists of an inner core made of 4 pore-forming GluA/GRIA proteins (GRIA1, GRIA2, GRIA3 and GRIA4) and 4 major auxiliary subunits arranged in a twofold symmetry. One of the two pairs of distinct binding sites is occupied either by CNIH2, CNIH3 or CACNG2, CACNG3. The other harbors CACNG2, CACNG3, CACNG4, CACNG8 or GSG1L. This inner core of AMPAR complex is complemented by outer core constituents binding directly to the GluA/GRIA proteins at sites distinct from the interaction sites of the inner core constituents. Outer core constituents include at least PRRT1, PRRT2, CKAMP44/SHISA9, FRRS1L and NRN1. The proteins of the inner and outer core serve as a platform for other, more peripherally associated AMPAR constituents, including OLFM3. Alone or in combination, these auxiliary subunits control the gating and pharmacology of the AMPAR complex and profoundly impact their biogenesis and protein processing. Homodimer. Interacts with MYOC. Interacts with OLFM2. Expressed in the brain (at protein level). Also expressed in the retina, mainly in the ganglion cell layer and in the amacrine cell subregion of the inner nuclear layer. Expressed at high levels in the epithelial cells of the posterior iris and the ciliary body and, at lower levels, in the trabecular meshwork. Isoform 2 preferentially expressed in retina and brain, while isoform 1 preferentially expressed in the tissues of the eye angle.

It is found in the secreted. It localises to the synapse. The protein is Noelin-3 (Olfm3) of Rattus norvegicus (Rat).